Reading from the N-terminus, the 458-residue chain is UDP-N-acetylmuramoylalanine--D-glutamate ligase (458 aa).

An ATP-binding site is contributed by G124–T130.

It belongs to the MurCDEF family.

Its subcellular location is the cytoplasm. It carries out the reaction UDP-N-acetyl-alpha-D-muramoyl-L-alanine + D-glutamate + ATP = UDP-N-acetyl-alpha-D-muramoyl-L-alanyl-D-glutamate + ADP + phosphate + H(+). The protein operates within cell wall biogenesis; peptidoglycan biosynthesis. Cell wall formation. Catalyzes the addition of glutamate to the nucleotide precursor UDP-N-acetylmuramoyl-L-alanine (UMA). The chain is UDP-N-acetylmuramoylalanine--D-glutamate ligase from Clostridium botulinum (strain Okra / Type B1).